The following is a 109-amino-acid chain: Ubiquitin-related modifier 1 homolog (109 aa).

At glycine 109 the chain carries 1-thioglycine. Residue glycine 109 forms a Glycyl lysine isopeptide (Gly-Lys) (interchain with K-? in acceptor proteins) linkage.

This sequence belongs to the URM1 family. Post-translationally, C-terminal thiocarboxylation occurs in 2 steps, it is first acyl-adenylated (-COAMP) via the hesA/moeB/thiF part of the MOCS3 homolog, then thiocarboxylated (-COSH) via the rhodanese domain of the MOCS3 homolog.

Its subcellular location is the cytoplasm. Its pathway is tRNA modification; 5-methoxycarbonylmethyl-2-thiouridine-tRNA biosynthesis. In terms of biological role, acts as a sulfur carrier required for 2-thiolation of mcm(5)S(2)U at tRNA wobble positions of cytosolic tRNA(Lys), tRNA(Glu) and tRNA(Gln). Serves as sulfur donor in tRNA 2-thiolation reaction by being thiocarboxylated (-COSH) at its C-terminus by MOCS3. The sulfur is then transferred to tRNA to form 2-thiolation of mcm(5)S(2)U. Also acts as a ubiquitin-like protein (UBL) that is covalently conjugated via an isopeptide bond to lysine residues of target proteins. The thiocarboxylated form serves as substrate for conjugation and oxidative stress specifically induces the formation of UBL-protein conjugates. In Bombyx mori (Silk moth), this protein is Ubiquitin-related modifier 1 homolog.